Consider the following 292-residue polypeptide: NAD kinase (292 aa).

The active-site Proton acceptor is D73. NAD(+) is bound by residues 73 to 74 (DG), 147 to 148 (NE), H158, R175, D177, 188 to 193 (TGYSLS), and Q247.

Belongs to the NAD kinase family. The cofactor is a divalent metal cation.

It is found in the cytoplasm. The enzyme catalyses NAD(+) + ATP = ADP + NADP(+) + H(+). In terms of biological role, involved in the regulation of the intracellular balance of NAD and NADP, and is a key enzyme in the biosynthesis of NADP. Catalyzes specifically the phosphorylation on 2'-hydroxyl of the adenosine moiety of NAD to yield NADP. The sequence is that of NAD kinase from Buchnera aphidicola subsp. Acyrthosiphon pisum (strain 5A).